The chain runs to 2136 residues: U5 small nuclear ribonucleoprotein 200 kDa helicase (2136 aa).

Phosphoserine occurs at positions 17 and 26. Positions 39-81 (EVLSLVGKLEGTRMGDKAQRTKPQMQEERRAKRRKRDEDRHDM) are disordered. Lys46 participates in a covalent cross-link: Glycyl lysine isopeptide (Lys-Gly) (interchain with G-Cter in SUMO2). Over residues 48 to 81 (EGTRMGDKAQRTKPQMQEERRAKRRKRDEDRHDM) the composition is skewed to basic and acidic residues. A coiled-coil region spans residues 54–84 (DKAQRTKPQMQEERRAKRRKRDEDRHDMNKM). The residue at position 225 (Ser225) is a Phosphoserine. The residue at position 389 (Thr389) is a Phosphothreonine. The interval 395–2129 (DLDQGGEALA…YKFSVDVKEA (1735 aa)) is interaction with C9orf78 and WBP4. The region spanning 490-673 (RAALETDENL…FLRVDPAKGL (184 aa)) is the Helicase ATP-binding 1 domain. 503 to 510 (APTGAGKT) is a binding site for ATP. The short motif at 615–618 (DEIH) is the DEAH box element. Positions 684-921 (PLEQTYVGIT…NAKDAVNWLG (238 aa)) constitute a Helicase C-terminal 1 domain. Tyr709 is modified (phosphotyrosine). Lys944 is covalently cross-linked (Glycyl lysine isopeptide (Lys-Gly) (interchain with G-Cter in SUMO)). The residue at position 971 (Lys971) is an N6-acetyllysine; alternate. Lys971 participates in a covalent cross-link: Glycyl lysine isopeptide (Lys-Gly) (interchain with G-Cter in SUMO); alternate. The region spanning 982–1286 (TELGRIASHY…SCETQLPVSF (305 aa)) is the SEC63 1 domain. Residues Lys1071 and Lys1199 each participate in a glycyl lysine isopeptide (Lys-Gly) (interchain with G-Cter in SUMO) cross-link. The tract at residues 1282-2136 (LPVSFRHLIL…KEAETDSDSD (855 aa)) is interaction with TSSC4. The Helicase ATP-binding 2 domain occupies 1337–1512 (NTVYNSDDNV…WLGCSATSTF (176 aa)). 1350–1357 (APTGSGKT) contacts ATP. Thr1428 is subject to Phosphothreonine. The DEAH box signature appears at 1454-1457 (DEVH). Residues 1545-1753 (PVYHAITKHS…TIENKQDAVD (209 aa)) form the Helicase C-terminal 2 domain. Thr1765 bears the Phosphothreonine mark. In terms of domain architecture, SEC63 2 spans 1812-2124 (PLNLGMIAAY…GCDQEYKFSV (313 aa)). Ser2002 is subject to Phosphoserine. Lys2091 participates in a covalent cross-link: Glycyl lysine isopeptide (Lys-Gly) (interchain with G-Cter in SUMO). Residue Thr2131 is modified to Phosphothreonine. Residues Ser2133 and Ser2135 each carry the phosphoserine modification.

The protein belongs to the helicase family. SKI2 subfamily. Component of a core complex containing at least PRPF8, SNRNP200, EFTUD2 and SNRNP40. Component of the U5 snRNP and U4/U6-U5 tri-snRNP complexes, building blocks of the spliceosome. Component of the U4/U6-U5 tri-snRNP complex composed of the U4, U6 and U5 snRNAs and at least PRPF3, PRPF4, PRPF6, PRPF8, PRPF31, SNRNP200, TXNL4A, SNRNP40, DDX23, CD2BP2, PPIH, SNU13, EFTUD2, SART1 and USP39. Component of precatalytic, catalytic and postcatalytic spliceosomal complexes. Component of the minor spliceosome, which splices U12-type introns. Interacts with C9orf78; the interaction is direct and mutually exclusive with its interaction with WBP4. Interacts with WBP4; the interaction is mutually exclusive with its interaction with C9orf78. Interacts with PRPF8. Interacts with TSSC4; the interaction is direct, excludes recruitment of C9ORF78 and WBP4 to SNRNP200 and negatively regulates its RNA helicase activity.

It is found in the nucleus. It catalyses the reaction ATP + H2O = ADP + phosphate + H(+). In terms of biological role, catalyzes the ATP-dependent unwinding of U4/U6 RNA duplices, an essential step in the assembly of a catalytically active spliceosome. Plays a role in pre-mRNA splicing as core component of precatalytic, catalytic and postcatalytic spliceosomal complexes. As a component of the minor spliceosome, involved in the splicing of U12-type introns in pre-mRNAs. Involved in spliceosome assembly, activation and disassembly. Mediates changes in the dynamic network of RNA-RNA interactions in the spliceosome. The protein is U5 small nuclear ribonucleoprotein 200 kDa helicase (Snrnp200) of Mus musculus (Mouse).